The sequence spans 216 residues: ATP phosphoribosyltransferase (216 aa).

Belongs to the ATP phosphoribosyltransferase family. Short subfamily. In terms of assembly, heteromultimer composed of HisG and HisZ subunits.

Its subcellular location is the cytoplasm. The catalysed reaction is 1-(5-phospho-beta-D-ribosyl)-ATP + diphosphate = 5-phospho-alpha-D-ribose 1-diphosphate + ATP. Its pathway is amino-acid biosynthesis; L-histidine biosynthesis; L-histidine from 5-phospho-alpha-D-ribose 1-diphosphate: step 1/9. In terms of biological role, catalyzes the condensation of ATP and 5-phosphoribose 1-diphosphate to form N'-(5'-phosphoribosyl)-ATP (PR-ATP). Has a crucial role in the pathway because the rate of histidine biosynthesis seems to be controlled primarily by regulation of HisG enzymatic activity. The sequence is that of ATP phosphoribosyltransferase from Chromohalobacter salexigens (strain ATCC BAA-138 / DSM 3043 / CIP 106854 / NCIMB 13768 / 1H11).